Here is a 241-residue protein sequence, read N- to C-terminus: Methylthioribulose-1-phosphate dehydratase (241 aa).

C100 provides a ligand contact to substrate. The Zn(2+) site is built by H117 and H119. E146 acts as the Proton donor/acceptor in catalysis. H202 is a binding site for Zn(2+).

This sequence belongs to the aldolase class II family. MtnB subfamily. Zn(2+) is required as a cofactor.

The protein resides in the cytoplasm. It catalyses the reaction 5-(methylsulfanyl)-D-ribulose 1-phosphate = 5-methylsulfanyl-2,3-dioxopentyl phosphate + H2O. The protein operates within amino-acid biosynthesis; L-methionine biosynthesis via salvage pathway; L-methionine from S-methyl-5-thio-alpha-D-ribose 1-phosphate: step 2/6. Its function is as follows. Catalyzes the dehydration of methylthioribulose-1-phosphate (MTRu-1-P) into 2,3-diketo-5-methylthiopentyl-1-phosphate (DK-MTP-1-P). This is Methylthioribulose-1-phosphate dehydratase from Ajellomyces dermatitidis (strain ER-3 / ATCC MYA-2586) (Blastomyces dermatitidis).